A 498-amino-acid polypeptide reads, in one-letter code: Glycylpeptide N-tetradecanoyltransferase 2 (498 aa).

The interval Met-1–Met-88 is disordered. Residues Glu-15 to Thr-32 are compositionally biased toward acidic residues. The residue at position 38 (Ser-38) is a Phosphoserine. Basic residues predominate over residues Ala-45–Glu-57. The segment covering Ser-61 to Val-86 has biased composition (polar residues). Positions 117, 122, 250, 252, 258, 260, 261, and 262 each coordinate tetradecanoyl-CoA.

The protein belongs to the NMT family.

It is found in the cytoplasm. The protein localises to the membrane. The enzyme catalyses N-terminal glycyl-[protein] + tetradecanoyl-CoA = N-tetradecanoylglycyl-[protein] + CoA + H(+). It carries out the reaction N-terminal glycyl-L-lysyl-[protein] + tetradecanoyl-CoA = N-terminal glycyl-(N(6)-tetradecanoyl)-L-lysyl-[protein] + CoA + H(+). Its function is as follows. Adds a myristoyl group to the N-terminal glycine residue of certain cellular and viral proteins. Also able to mediate N-terminal lysine myristoylation of proteins: catalyzes myristoylation of ARF6 on both 'Gly-2' and 'Lys-3'. Lysine myristoylation is required to maintain ARF6 on membranes during the GTPase cycle. In Homo sapiens (Human), this protein is Glycylpeptide N-tetradecanoyltransferase 2.